Here is a 103-residue protein sequence, read N- to C-terminus: Eukaryotic translation initiation factor 4E-1A-binding protein homolog (103 aa).

A disordered region spans residues 49–103 (NSPLSKTPPPQLAHITNTELNKKVEKSTTTPTTTTPPTTTAKPKPTNDDDIFPME). Positions 76–92 (TTTPTTTTPPTTTAKPK) are enriched in low complexity.

The protein belongs to the eIF4E-binding protein family.

Functionally, regulates assembly of the eIF4F complex. This Dictyostelium discoideum (Social amoeba) protein is Eukaryotic translation initiation factor 4E-1A-binding protein homolog (febA).